The sequence spans 949 residues: Glycine dehydrogenase (decarboxylating) (949 aa).

The residue at position 700 (K700) is an N6-(pyridoxal phosphate)lysine.

The protein belongs to the GcvP family. As to quaternary structure, the glycine cleavage system is composed of four proteins: P, T, L and H. The cofactor is pyridoxal 5'-phosphate.

The catalysed reaction is N(6)-[(R)-lipoyl]-L-lysyl-[glycine-cleavage complex H protein] + glycine + H(+) = N(6)-[(R)-S(8)-aminomethyldihydrolipoyl]-L-lysyl-[glycine-cleavage complex H protein] + CO2. The glycine cleavage system catalyzes the degradation of glycine. The P protein binds the alpha-amino group of glycine through its pyridoxal phosphate cofactor; CO(2) is released and the remaining methylamine moiety is then transferred to the lipoamide cofactor of the H protein. The protein is Glycine dehydrogenase (decarboxylating) of Flavobacterium johnsoniae (strain ATCC 17061 / DSM 2064 / JCM 8514 / BCRC 14874 / CCUG 350202 / NBRC 14942 / NCIMB 11054 / UW101) (Cytophaga johnsonae).